A 278-amino-acid chain; its full sequence is Diaminopimelate epimerase (278 aa).

Substrate is bound by residues Asn13, Gln46, and Asn65. Cys74 serves as the catalytic Proton donor. Residues 75–76, Asn157, Asn190, and 208–209 each bind substrate; these read GN and ER. The Proton acceptor role is filled by Cys217. 218-219 is a binding site for substrate; it reads GT.

The protein belongs to the diaminopimelate epimerase family. As to quaternary structure, homodimer.

The protein localises to the cytoplasm. It catalyses the reaction (2S,6S)-2,6-diaminopimelate = meso-2,6-diaminopimelate. It functions in the pathway amino-acid biosynthesis; L-lysine biosynthesis via DAP pathway; DL-2,6-diaminopimelate from LL-2,6-diaminopimelate: step 1/1. Its function is as follows. Catalyzes the stereoinversion of LL-2,6-diaminopimelate (L,L-DAP) to meso-diaminopimelate (meso-DAP), a precursor of L-lysine and an essential component of the bacterial peptidoglycan. This Magnetococcus marinus (strain ATCC BAA-1437 / JCM 17883 / MC-1) protein is Diaminopimelate epimerase.